The sequence spans 72 residues: Translation initiation factor IF-1 (72 aa).

The region spanning Met1–Lys72 is the S1-like domain.

Belongs to the IF-1 family. As to quaternary structure, component of the 30S ribosomal translation pre-initiation complex which assembles on the 30S ribosome in the order IF-2 and IF-3, IF-1 and N-formylmethionyl-tRNA(fMet); mRNA recruitment can occur at any time during PIC assembly.

It localises to the cytoplasm. One of the essential components for the initiation of protein synthesis. Stabilizes the binding of IF-2 and IF-3 on the 30S subunit to which N-formylmethionyl-tRNA(fMet) subsequently binds. Helps modulate mRNA selection, yielding the 30S pre-initiation complex (PIC). Upon addition of the 50S ribosomal subunit IF-1, IF-2 and IF-3 are released leaving the mature 70S translation initiation complex. The sequence is that of Translation initiation factor IF-1 from Helicobacter acinonychis (strain Sheeba).